The sequence spans 476 residues: MRFKPVIGLEIHVQLNTKTKAFCSCPADVFELEPNNAICPVCTGQPGALPVPSKQMYEFGILLAAALNCKIHEFTRFDRKNYFYPDLPKGYQITQYFYPLATNGYLKLNGKKIRINRIHLEEDAGKLLHSSETITQAESTLVDMNRCGVPLAEIVTEPDIESPEEARKFLEKLRQILRYLGVSTGDMEKGALRCDANISVIDLENNVQSNKVEVKNMNSFKFVEKALEYEFNRIKKHLKKGENVVKETRGWDLASKKTISMRSKEEANDYRYFPEPDIPPVVIPKEEINKIIEKIPELPDEKINRFKIQYGLTDYEAGILTTSINLANYFEECVKETKNPKETSNWFLTELLKYISPEEVFENLKIKPKHFKELFDLISSGKITRNIAKEIFKEIFETGKNPEEIVKEKGIEVIGDESLIEDMLKKIMAENEDKVNAYKNGKKGLLGFFVGQIMKQTKGKADAKKANEIAKRLLGD.

Belongs to the GatB/GatE family. GatB subfamily. As to quaternary structure, heterotrimer of A, B and C subunits.

The enzyme catalyses L-glutamyl-tRNA(Gln) + L-glutamine + ATP + H2O = L-glutaminyl-tRNA(Gln) + L-glutamate + ADP + phosphate + H(+). It carries out the reaction L-aspartyl-tRNA(Asn) + L-glutamine + ATP + H2O = L-asparaginyl-tRNA(Asn) + L-glutamate + ADP + phosphate + 2 H(+). Functionally, allows the formation of correctly charged Asn-tRNA(Asn) or Gln-tRNA(Gln) through the transamidation of misacylated Asp-tRNA(Asn) or Glu-tRNA(Gln) in organisms which lack either or both of asparaginyl-tRNA or glutaminyl-tRNA synthetases. The reaction takes place in the presence of glutamine and ATP through an activated phospho-Asp-tRNA(Asn) or phospho-Glu-tRNA(Gln). This chain is Aspartyl/glutamyl-tRNA(Asn/Gln) amidotransferase subunit B, found in Thermosipho melanesiensis (strain DSM 12029 / CIP 104789 / BI429).